A 430-amino-acid polypeptide reads, in one-letter code: Histidinol dehydrogenase (430 aa).

NAD(+)-binding residues include tyrosine 130, glutamine 191, and asparagine 214. The substrate site is built by serine 237, glutamine 259, and histidine 262. Zn(2+)-binding residues include glutamine 259 and histidine 262. Residues glutamate 327 and histidine 328 each act as proton acceptor in the active site. Residues histidine 328, aspartate 361, glutamate 415, and histidine 420 each contribute to the substrate site. A Zn(2+)-binding site is contributed by aspartate 361. Residue histidine 420 participates in Zn(2+) binding.

This sequence belongs to the histidinol dehydrogenase family. Requires Zn(2+) as cofactor.

It catalyses the reaction L-histidinol + 2 NAD(+) + H2O = L-histidine + 2 NADH + 3 H(+). The protein operates within amino-acid biosynthesis; L-histidine biosynthesis; L-histidine from 5-phospho-alpha-D-ribose 1-diphosphate: step 9/9. Its function is as follows. Catalyzes the sequential NAD-dependent oxidations of L-histidinol to L-histidinaldehyde and then to L-histidine. The chain is Histidinol dehydrogenase (hisD) from Zymomonas mobilis subsp. mobilis (strain ATCC 31821 / ZM4 / CP4).